The sequence spans 315 residues: Acetyl-coenzyme A carboxylase carboxyl transferase subunit alpha (315 aa).

The CoA carboxyltransferase C-terminal domain occupies 39–293; the sequence is RLQDKSSTLT…RGELASQLAM (255 aa).

It belongs to the AccA family. Acetyl-CoA carboxylase is a heterohexamer composed of biotin carboxyl carrier protein (AccB), biotin carboxylase (AccC) and two subunits each of ACCase subunit alpha (AccA) and ACCase subunit beta (AccD).

The protein resides in the cytoplasm. It catalyses the reaction N(6)-carboxybiotinyl-L-lysyl-[protein] + acetyl-CoA = N(6)-biotinyl-L-lysyl-[protein] + malonyl-CoA. The protein operates within lipid metabolism; malonyl-CoA biosynthesis; malonyl-CoA from acetyl-CoA: step 1/1. In terms of biological role, component of the acetyl coenzyme A carboxylase (ACC) complex. First, biotin carboxylase catalyzes the carboxylation of biotin on its carrier protein (BCCP) and then the CO(2) group is transferred by the carboxyltransferase to acetyl-CoA to form malonyl-CoA. The protein is Acetyl-coenzyme A carboxylase carboxyl transferase subunit alpha of Pseudomonas fluorescens (strain SBW25).